The chain runs to 603 residues: Iron-sulfur clusters transporter ATM1, mitochondrial (603 aa).

Residues 20–41 form a helical membrane-spanning segment; sequence VLLAVGLLVGGKVLNVQVPFFF. Residues 20 to 310 enclose the ABC transmembrane type-1 domain; sequence VLLAVGLLVG…LGSVYRELRQ (291 aa). At 42–64 the chain is on the mitochondrial intermembrane side; the sequence is REIVDSLNVDIAATGGTVATVAG. A helical membrane pass occupies residues 65 to 88; that stretch reads TMIFAYGASRIGAVVSQELRNAVF. Topologically, residues 89–137 are mitochondrial matrix; the sequence is SSVAQKAIRRVATRTFGHLLNLDLNFHLSKQTGGLTRAIDRGTKGISFL. Residues 138-161 traverse the membrane as a helical segment; that stretch reads LTSMVFHIVPTALEISMVCGILTY. Gln162 is a topological domain (mitochondrial intermembrane). A helical transmembrane segment spans residues 163–183; that stretch reads FGWEFAAVTALTMSAYTAFTI. Residues 184 to 249 lie on the Mitochondrial matrix side of the membrane; the sequence is WTTAWRTKFR…SSIKVATSLA (66 aa). Glutathione contacts are provided by residues 189–193 and 252–255; these read RTKFR and NSGQ. The chain crosses the membrane as a helical span at residues 250-268; the sequence is FLNSGQNIIFSSALTIMMW. The Mitochondrial intermembrane segment spans residues 269 to 283; the sequence is LGAKGIVAGSLSVGD. The helical transmembrane segment at 284-305 threads the bilayer; sequence LVLINQLVFQLSVPLNFLGSVY. Position 302 (Gly302) interacts with glutathione. Over 306 to 603 the chain is Mitochondrial matrix; that stretch reads RELRQSLLDM…SEREAPVPVK (298 aa). The ABC transporter domain maps to 345 to 581; the sequence is IRFDNVSFGY…NGLYTELWMA (237 aa). Residues Tyr354 and 378–389 contribute to the ATP site; that span reads GPSGCGKSTLLR.

The protein belongs to the ABC transporter superfamily. ABCB family. Heavy Metal importer (TC 3.A.1.210) subfamily. In terms of assembly, homodimer.

It is found in the mitochondrion inner membrane. In terms of biological role, performs an essential function in the generation of cytoplasmic iron-sulfur proteins by mediating the ATP-dependent export of Fe/S cluster precursors synthesized by NFS1 and other mitochondrial proteins. Hydrolyzes ATP. Binds glutathione and may function by transporting a glutathione-conjugated iron-sulfur compound. The polypeptide is Iron-sulfur clusters transporter ATM1, mitochondrial (Chaetomium globosum (strain ATCC 6205 / CBS 148.51 / DSM 1962 / NBRC 6347 / NRRL 1970) (Soil fungus)).